The chain runs to 69 residues: Sec-independent protein translocase protein TatA (69 aa).

The helical transmembrane segment at 1 to 21 (MFGKLGMPELVLIFAVALVIF) threads the bilayer.

Belongs to the TatA/E family. In terms of assembly, forms a complex with TatC.

The protein localises to the cell membrane. In terms of biological role, part of the twin-arginine translocation (Tat) system that transports large folded proteins containing a characteristic twin-arginine motif in their signal peptide across membranes. TatA could form the protein-conducting channel of the Tat system. The polypeptide is Sec-independent protein translocase protein TatA (Alkaliphilus metalliredigens (strain QYMF)).